We begin with the raw amino-acid sequence, 457 residues long: MQHDDTIAAIATPLGQGGIGIIRISGPASLEVLRALFRPSSSRFGGFRPWTLHHGTITDGCDPLDDVLAVHMPGPRTFTGEDVSEIHCHGGSGVLAAVLEACVRHGARYAERGEFTRRAFLNGRMDLTQAEAVAEMIAAPSREGMRLAQAKLDGLLGQRVGALRARLDALRMQLCVAVDFPEEEVECLAPEAFLAEIEAVRQGVVELSAGYARTRCWQDGALVVLAGQVNAGKSSLMNALLGRRRAIVTDLPGTTRDFIEEPLNLSGLAIRLADTAGLRETGDIVEQEGVRMSRDLVAQADLVLLVTDATQGLQGPELELLRHAGPERVLVVFNKTDLLEGRILPSAPEGCRSVHVAAASGDGVESLVTAIRAAVLAATGAGEPEAGELAPNMRQAAALDKAATILDELAGDIRAHVPYDLCGVRLDGACAALMDVTGQSTPEAILDAIFASFCIGK.

3 residues coordinate (6S)-5-formyl-5,6,7,8-tetrahydrofolate: Arg23, Glu85, and Arg124. The TrmE-type G domain occupies 220–376; the sequence is GALVVLAGQV…LVTAIRAAVL (157 aa). Position 230 (Asn230) interacts with K(+). GTP contacts are provided by residues 230 to 235, 249 to 255, and 274 to 277; these read NAGKSS, TDLPGTT, and DTAG. Mg(2+) is bound at residue Ser234. The K(+) site is built by Thr249, Leu251, and Thr254. Thr255 provides a ligand contact to Mg(2+). Lys457 is a (6S)-5-formyl-5,6,7,8-tetrahydrofolate binding site.

It belongs to the TRAFAC class TrmE-Era-EngA-EngB-Septin-like GTPase superfamily. TrmE GTPase family. In terms of assembly, homodimer. Heterotetramer of two MnmE and two MnmG subunits. It depends on K(+) as a cofactor.

The protein localises to the cytoplasm. Exhibits a very high intrinsic GTPase hydrolysis rate. Involved in the addition of a carboxymethylaminomethyl (cmnm) group at the wobble position (U34) of certain tRNAs, forming tRNA-cmnm(5)s(2)U34. In Nitratidesulfovibrio vulgaris (strain DP4) (Desulfovibrio vulgaris), this protein is tRNA modification GTPase MnmE.